Consider the following 415-residue polypeptide: ATP-dependent Clp protease ATP-binding subunit ClpX (415 aa).

The region spanning 1–54 is the ClpX-type ZB domain; the sequence is MARNRMGGALICSFCNKPESSERFVVPGPGGIAICDRCVDLCESYIKSYKTVRP. Residues Cys12, Cys15, Cys35, and Cys38 each contribute to the Zn(2+) site. 117-124 contacts ATP; sequence PTGSGKTL.

This sequence belongs to the ClpX chaperone family. As to quaternary structure, component of the ClpX-ClpP complex. Forms a hexameric ring that, in the presence of ATP, binds to fourteen ClpP subunits assembled into a disk-like structure with a central cavity, resembling the structure of eukaryotic proteasomes.

In terms of biological role, ATP-dependent specificity component of the Clp protease. It directs the protease to specific substrates. Can perform chaperone functions in the absence of ClpP. This is ATP-dependent Clp protease ATP-binding subunit ClpX from Treponema denticola (strain ATCC 35405 / DSM 14222 / CIP 103919 / JCM 8153 / KCTC 15104).